A 975-amino-acid polypeptide reads, in one-letter code: Glycine dehydrogenase (decarboxylating) (975 aa).

Position 723 is an N6-(pyridoxal phosphate)lysine (Lys723).

Belongs to the GcvP family. In terms of assembly, the glycine cleavage system is composed of four proteins: P, T, L and H. Pyridoxal 5'-phosphate is required as a cofactor.

The enzyme catalyses N(6)-[(R)-lipoyl]-L-lysyl-[glycine-cleavage complex H protein] + glycine + H(+) = N(6)-[(R)-S(8)-aminomethyldihydrolipoyl]-L-lysyl-[glycine-cleavage complex H protein] + CO2. Functionally, the glycine cleavage system catalyzes the degradation of glycine. The P protein binds the alpha-amino group of glycine through its pyridoxal phosphate cofactor; CO(2) is released and the remaining methylamine moiety is then transferred to the lipoamide cofactor of the H protein. In Burkholderia ambifaria (strain ATCC BAA-244 / DSM 16087 / CCUG 44356 / LMG 19182 / AMMD) (Burkholderia cepacia (strain AMMD)), this protein is Glycine dehydrogenase (decarboxylating).